The following is a 315-amino-acid chain: Calumenin-B (315 aa).

Residues 1 to 19 (MEQWPLLFVVALCILQSSS) form the signal peptide. Positions 22–39 (MEKKDRVHHDAPLSNKDH) are enriched in basic and acidic residues. The tract at residues 22-42 (MEKKDRVHHDAPLSNKDHDDE) is disordered. 6 EF-hand domains span residues 68-103 (ESKERLGKIVEKIDEDHDGFVTADEMKRWIKHAQRR), 104-139 (WIYEDVDRQWQAHDLNSDSFVSWEEYKDATYGYILD), 151-186 (QMMTRDERRFKMADQDGDLRANKEEFTAFLHPEEFD), 188-223 (MKDIVVLETMEDIDKNGDGLIDLNEYIGDMYSQNGD), 229-264 (WVKTEREQFTEFRDKNKDGRMDKDETRDWILPADYD), and 265-300 (HAEAEAKHLLYESDADKDGRLTKQEIVDKYDLFVGS). Residues Asp-81, Asp-83, Asp-85, Glu-92, Asp-117, Asn-119, Asp-121, Glu-128, Asp-164, Asp-166, Asp-168, Arg-170, Glu-175, Asp-201, Asn-203, Asp-205, Glu-212, Asp-242, Asn-244, Asp-246, Arg-248, Glu-253, Asp-278, Asp-280, Asp-282, Arg-284, and Glu-289 each contribute to the Ca(2+) site. The short motif at 312–315 (HDEF) is the Prevents secretion from ER element.

It belongs to the CREC family. In terms of assembly, interacts with ggcx.

It is found in the endoplasmic reticulum membrane. The protein localises to the golgi apparatus. The protein resides in the secreted. Its subcellular location is the melanosome. It localises to the sarcoplasmic reticulum lumen. Involved in regulation of vitamin K-dependent carboxylation of multiple N-terminal glutamate residues. Seems to inhibit gamma-carboxylase ggcx. Binds 7 calcium ions with a low affinity. The chain is Calumenin-B (calub) from Danio rerio (Zebrafish).